A 310-amino-acid polypeptide reads, in one-letter code: UDP-N-acetylenolpyruvoylglucosamine reductase (310 aa).

The region spanning 35–203 is the FAD-binding PCMH-type domain; sequence RAGGAAEALV…TRVRFALRKG (169 aa). The active site involves Arg-183. The active-site Proton donor is the Ser-232. Residue Glu-302 is part of the active site.

Belongs to the MurB family. Requires FAD as cofactor.

The protein resides in the cytoplasm. It catalyses the reaction UDP-N-acetyl-alpha-D-muramate + NADP(+) = UDP-N-acetyl-3-O-(1-carboxyvinyl)-alpha-D-glucosamine + NADPH + H(+). It functions in the pathway cell wall biogenesis; peptidoglycan biosynthesis. Cell wall formation. This Myxococcus xanthus (strain DK1622) protein is UDP-N-acetylenolpyruvoylglucosamine reductase.